A 582-amino-acid polypeptide reads, in one-letter code: ATP-dependent lipid A-core flippase (582 aa).

5 helical membrane-spanning segments follow: residues 16 to 36 (LWPT…ALIL), 63 to 83 (VLVW…ITSY), 153 to 173 (IIGL…ILIV), 253 to 273 (PIIQ…ASFP), and 275 to 295 (VMDN…IALM). The 283-residue stretch at 28–310 (IVAGVALILN…LTNVNAQFQR (283 aa)) folds into the ABC transmembrane type-1 domain. The region spanning 342 to 578 (VEFRNVTFTY…RGVYAQLHKM (237 aa)) is the ABC transporter domain. 376-383 (GRSGSGKS) contacts ATP.

Belongs to the ABC transporter superfamily. Lipid exporter (TC 3.A.1.106) family. Homodimer.

The protein resides in the cell inner membrane. It catalyses the reaction ATP + H2O + lipid A-core oligosaccharideSide 1 = ADP + phosphate + lipid A-core oligosaccharideSide 2.. Involved in lipopolysaccharide (LPS) biosynthesis. Translocates lipid A-core from the inner to the outer leaflet of the inner membrane. Transmembrane domains (TMD) form a pore in the inner membrane and the ATP-binding domain (NBD) is responsible for energy generation. The chain is ATP-dependent lipid A-core flippase from Shigella sonnei (strain Ss046).